Reading from the N-terminus, the 208-residue chain is Uracil phosphoribosyltransferase (208 aa).

5-phospho-alpha-D-ribose 1-diphosphate contacts are provided by residues R78, R103, and 130–138; that span reads DPMLATGGS. Residues I193 and 198 to 200 contribute to the uracil site; that span reads GDA. D199 contacts 5-phospho-alpha-D-ribose 1-diphosphate.

Belongs to the UPRTase family. Mg(2+) serves as cofactor.

The catalysed reaction is UMP + diphosphate = 5-phospho-alpha-D-ribose 1-diphosphate + uracil. The protein operates within pyrimidine metabolism; UMP biosynthesis via salvage pathway; UMP from uracil: step 1/1. With respect to regulation, allosterically activated by GTP. Its function is as follows. Catalyzes the conversion of uracil and 5-phospho-alpha-D-ribose 1-diphosphate (PRPP) to UMP and diphosphate. This Pelobacter propionicus (strain DSM 2379 / NBRC 103807 / OttBd1) protein is Uracil phosphoribosyltransferase.